The following is a 707-amino-acid chain: Ribosomal RNA large subunit methyltransferase K/L (707 aa).

In terms of domain architecture, THUMP spans 44-155 (VIYNLCLWSR…NDILTVSFDL (112 aa)).

The protein belongs to the methyltransferase superfamily. RlmKL family.

Its subcellular location is the cytoplasm. The catalysed reaction is guanosine(2445) in 23S rRNA + S-adenosyl-L-methionine = N(2)-methylguanosine(2445) in 23S rRNA + S-adenosyl-L-homocysteine + H(+). The enzyme catalyses guanosine(2069) in 23S rRNA + S-adenosyl-L-methionine = N(2)-methylguanosine(2069) in 23S rRNA + S-adenosyl-L-homocysteine + H(+). Its function is as follows. Specifically methylates the guanine in position 2445 (m2G2445) and the guanine in position 2069 (m7G2069) of 23S rRNA. This Legionella pneumophila (strain Paris) protein is Ribosomal RNA large subunit methyltransferase K/L.